A 596-amino-acid polypeptide reads, in one-letter code: Transcription factor COE3 (596 aa).

The segment at methionine 1–serine 22 is disordered. Residues arginine 63–asparagine 66 form an interaction with DNA region. Residues cysteine 151–cysteine 170 form a C5-type zinc finger. 2 interaction with DNA regions span residues asparagine 197 to asparagine 204 and asparagine 236 to lysine 239. Positions proline 263 to threonine 346 constitute an IPT/TIG domain. The interval threonine 451–tyrosine 483 is disordered.

This sequence belongs to the COE family. As to quaternary structure, forms either a homodimer or a heterodimer with a related family member. In terms of tissue distribution, expressed in brain.

It localises to the nucleus. Its function is as follows. Transcriptional activator. Recognizes variations of the palindromic sequence 5'-ATTCCCNNGGGAATT-3'. This is Transcription factor COE3 (EBF3) from Homo sapiens (Human).